We begin with the raw amino-acid sequence, 383 residues long: Na(+)/H(+) antiporter NhaA (383 aa).

Helical transmembrane passes span 21 to 41 (AAGV…NSIW), 56 to 76 (LTMR…LAGL), 94 to 114 (LLPG…YVAF), 123 to 143 (GWAI…ALAG), 152 to 172 (VFLT…IALF), 175 to 195 (GTLS…LLML), 202 to 222 (TLFP…KSGI), 258 to 278 (FVIL…GVTV), 287 to 307 (LGVG…AVSI), 326 to 346 (IGIA…AILA), and 355 to 375 (QIKL…YILL).

The protein belongs to the NhaA Na(+)/H(+) (TC 2.A.33) antiporter family.

The protein resides in the cell inner membrane. The enzyme catalyses Na(+)(in) + 2 H(+)(out) = Na(+)(out) + 2 H(+)(in). Functionally, na(+)/H(+) antiporter that extrudes sodium in exchange for external protons. In Granulibacter bethesdensis (strain ATCC BAA-1260 / CGDNIH1), this protein is Na(+)/H(+) antiporter NhaA.